The sequence spans 179 residues: MISRSLVMEYLTNPGALSLAAGVACGVCLGWGLRMRFGMLPKSSVRETNPDTETEASILGESGEYKMILVVRNDLKMGKGKVAAQCSHAAVSAYKQIQRRNPELLKEWEYCGQPKVVVKAPDEETLVELLTHAKVLGLTVSLIQDAGRTQIAPGSRTVLGIGPGPADLIDKVTGHLKLY.

Residues 10–32 (YLTNPGALSLAAGVACGVCLGWG) traverse the membrane as a helical segment. Residues K76, K81, K95, K106, K115, K171, and K177 each participate in a glycyl lysine isopeptide (Lys-Gly) (interchain with G-Cter in ubiquitin) cross-link.

Belongs to the PTH2 family. As to quaternary structure, monomer. Ubiquitinated by PRKN during mitophagy, leading to its degradation and enhancement of mitophagy. Deubiquitinated by USP30.

It localises to the mitochondrion outer membrane. The enzyme catalyses an N-acyl-L-alpha-aminoacyl-tRNA + H2O = an N-acyl-L-amino acid + a tRNA + H(+). Functionally, peptidyl-tRNA hydrolase which releases tRNAs from the ribosome during protein synthesis. Promotes caspase-independent apoptosis by regulating the function of two transcriptional regulators, AES and TLE1. The sequence is that of Peptidyl-tRNA hydrolase 2, mitochondrial (PTRH2) from Bos taurus (Bovine).